A 637-amino-acid chain; its full sequence is Putative pentatricopeptide repeat-containing protein At5g65820 (637 aa).

12 PPR repeats span residues 146-180, 182-216, 217-247, 251-285, 286-320, 321-355, 356-390, 391-425, 426-460, 461-495, 498-532, and 534-568; these read SIEV…NPQL, EPEL…GFEP, DEYV…MRMR, NLRY…GFEP, DIVD…GFEP, NANC…ECEA, DVVT…GLMP, SELT…EYHP, DIGI…GLSP, GVDT…GLFS, QYGT…GACE, and NVLS…DFMP. Residues 616–630 are compositionally biased toward basic and acidic residues; it reads QDLTEKAKSKQDREG. The disordered stretch occupies residues 616-637; sequence QDLTEKAKSKQDREGKKKQRSR.

Belongs to the PPR family. P subfamily.

The sequence is that of Putative pentatricopeptide repeat-containing protein At5g65820 from Arabidopsis thaliana (Mouse-ear cress).